We begin with the raw amino-acid sequence, 1552 residues long: ABC multidrug transporter lscH (1552 aa).

A run of 2 helical transmembrane segments spans residues 32-52 (ETILSILPSVLVIVVAPIPII) and 68-88 (WFKKISSICFITLSAALVGLW). A glycan (N-linked (GlcNAc...) asparagine) is linked at Asn91. Helical transmembrane passes span 100-120 (STPSAVLTFVLSLVYVLLSTI), 158-178 (HSAIPPVFASSLALRVVMLLL), 280-300 (LFQIGFTYAQPFLITAAIELA), 311-331 (NGYGLIGAYILVYSGIAVSVG), 413-433 (AACVMSVGFAIVVMVGTVFLA), 457-477 (ALASIKWLKISGLTDVAFSVI), 500-520 (ILSICTPILGPLLTFAVFAGI), and 528-548 (LTIAKVFTAFSIIVLLNSPLA). Residues 280-559 (LFQIGFTYAQ…IVQALPQISG (280 aa)) form the ABC transmembrane type-1 1 domain. Residues 573–655 (AEERHDPRST…PDANGDSRDA (83 aa)) are disordered. The segment covering 581–602 (STTTGTSPESNNGSQQTLSDKQ) has biased composition (polar residues). Asn592 is a glycosylation site (N-linked (GlcNAc...) asparagine). One can recognise an ABC transporter 1 domain in the interval 639–884 (GHLADTTPDA…AELGWADRDL (246 aa)). 676–683 (GPVGCGKS) provides a ligand contact to ATP. N-linked (GlcNAc...) asparagine glycosylation is found at Asn719 and Asn834. Residues 887 to 912 (QQEKPGKDELNHEHGEYSESAPEKLR) show a composition bias toward basic and acidic residues. Residues 887 to 917 (QQEKPGKDELNHEHGEYSESAPEKLRRSQTN) form a disordered region. Transmembrane regions (helical) follow at residues 957–977 (GWLTITIFVIAICVYAFCDSF) and 1005–1025 (AVLGVGAVAACLIGTWQLFII). The 279-residue stretch at 963–1241 (IFVIAICVYA…ATITSWVTLE (279 aa)) folds into the ABC transmembrane type-1 2 domain. A glycan (N-linked (GlcNAc...) asparagine) is linked at Asn1028. 4 helical membrane-spanning segments follow: residues 1076 to 1096 (AALGVVMALSFGIAQFILVCV), 1100 to 1120 (YMAALLPFLLAVLYAIQHFYL), 1184 to 1204 (WITFAVNMVIMMLAVILIVLT), and 1210 to 1230 (AIGPGYVGIALSNILAFSATM). One can recognise an ABC transporter 2 domain in the interval 1295–1538 (IELDNVTASY…PTSIFKELYL (244 aa)). Residues Asn1299 and Asn1313 are each glycosylated (N-linked (GlcNAc...) asparagine). 1328-1335 (GRTGSGKS) serves as a coordination point for ATP.

This sequence belongs to the ABC transporter superfamily. ABCC family. Conjugate transporter (TC 3.A.1.208) subfamily.

Its subcellular location is the cell membrane. In terms of biological role, ABC multidrug transporter; part of the gene cluster that mediates the biosynthesis of the lipopeptide antibiotics leucinostatins that show extensive biological activities, including antimalarial, antiviral, antibacterial, antifungal, and antitumor activities, as well as phytotoxic. May be involved in the efflux of leucinostatins. This is ABC multidrug transporter lscH from Purpureocillium lilacinum (Paecilomyces lilacinus).